The following is a 483-amino-acid chain: PRAME family member 12 (483 aa).

The LRR 1; degenerate repeat unit spans residues 97-122; it reads RWKLQVLDLRNVDENFWGIWSGASAL. The LRR 2; degenerate repeat unit spans residues 177–201; it reads HVCCKELQIFGIAIHRIIEVLNTVE. One copy of the LRR 3; degenerate repeat lies at 202 to 228; it reads LDCIQEVEVCCPWELSILIRFAPYLGQ. Residues 229–264 form an LRR 4; degenerate repeat; the sequence is MRNLRKLVLFNIHVSACIPLDRKEQFVIQFTSQFLK. LRR repeat units lie at residues 265 to 290, 291 to 322, 323 to 341, 347 to 374, and 375 to 399; these read LDYFQKLYMHSVSFLEGHLDQLLRCL, QAPLETVVMTECLLSESDLKHLSWCPSIRQLK, ELDLRGITLTHFSPEPLSV, EATLQTLDLEDCGIVDSQLSAILPALSR, and CSQLSTFSFCGNLISMAALENLLRH.

This sequence belongs to the PRAME family.

The sequence is that of PRAME family member 12 from Homo sapiens (Human).